The sequence spans 498 residues: Lysine--tRNA ligase (498 aa).

Mg(2+) contacts are provided by glutamate 408 and glutamate 415.

Belongs to the class-II aminoacyl-tRNA synthetase family. As to quaternary structure, homodimer. Requires Mg(2+) as cofactor.

It localises to the cytoplasm. It catalyses the reaction tRNA(Lys) + L-lysine + ATP = L-lysyl-tRNA(Lys) + AMP + diphosphate. The chain is Lysine--tRNA ligase from Listeria monocytogenes serovar 1/2a (strain ATCC BAA-679 / EGD-e).